The sequence spans 197 residues: Holliday junction branch migration complex subunit RuvA (197 aa).

Positions 1 to 64 (MIASVRGTLI…EDALTLYGFK (64 aa)) are domain I. Residues 65 to 145 (TVEQRQLFET…GLPVAPGVSP (81 aa)) are domain II. The tract at residues 146 to 153 (AVAAVNAE) is flexible linker. A domain III region spans residues 153 to 197 (ELSEMLVSLGFSSAEASTAIAALPPDAPLDLEERLRLALRYFGAR).

This sequence belongs to the RuvA family. As to quaternary structure, homotetramer. Forms an RuvA(8)-RuvB(12)-Holliday junction (HJ) complex. HJ DNA is sandwiched between 2 RuvA tetramers; dsDNA enters through RuvA and exits via RuvB. An RuvB hexamer assembles on each DNA strand where it exits the tetramer. Each RuvB hexamer is contacted by two RuvA subunits (via domain III) on 2 adjacent RuvB subunits; this complex drives branch migration. In the full resolvosome a probable DNA-RuvA(4)-RuvB(12)-RuvC(2) complex forms which resolves the HJ.

Its subcellular location is the cytoplasm. Its function is as follows. The RuvA-RuvB-RuvC complex processes Holliday junction (HJ) DNA during genetic recombination and DNA repair, while the RuvA-RuvB complex plays an important role in the rescue of blocked DNA replication forks via replication fork reversal (RFR). RuvA specifically binds to HJ cruciform DNA, conferring on it an open structure. The RuvB hexamer acts as an ATP-dependent pump, pulling dsDNA into and through the RuvAB complex. HJ branch migration allows RuvC to scan DNA until it finds its consensus sequence, where it cleaves and resolves the cruciform DNA. In Roseiflexus castenholzii (strain DSM 13941 / HLO8), this protein is Holliday junction branch migration complex subunit RuvA.